A 433-amino-acid chain; its full sequence is C2H2 type master regulator of conidiophore development brlA (433 aa).

3 disordered regions span residues 24-49 (SDCP…LYSQ), 240-269 (KSHT…ISGH), and 286-306 (MMQR…LRSN). Low complexity predominate over residues 30 to 49 (TSSFSPLDSPTPTPTSLYSQ). The span at 240 to 264 (KSHTPSTPHRSVSMGTPSGSDTPVS) shows a compositional bias: polar residues. The span at 288 to 302 (QRHRQPSRKPSKKQL) shows a compositional bias: basic residues. 2 consecutive C2H2-type zinc fingers follow at residues 321–345 (FKCK…MKSH) and 351–376 (HVCW…TKTH). The segment at 391–423 (ETSQDFDPDFRGQLTPDGRPIYGSKLEDSMPDC) is disordered.

It localises to the nucleus. BrlA, abaA and wetA are pivotal regulators of conidiophore development and conidium maturation. They act individually and together to regulate their own expression and that of numerous other sporulation-specific genes. Binds promoters of target genes at brlA response elements (BREs) containing the conserved sequence 5'-(C/A)(A/G)AGGG(G/A)-3'. Regulates genes involved in conidiogenesis. This Penicillium digitatum (strain PHI26 / CECT 20796) (Green mold) protein is C2H2 type master regulator of conidiophore development brlA.